The sequence spans 59 residues: Single-pass membrane and coiled-coil domain-containing protein 4 homolog (59 aa).

Residues 1 to 11 (MAGRNKAKPRL) show a composition bias toward basic residues. Positions 1–20 (MAGRNKAKPRLSKKEKEERR) are disordered. Residues 10-30 (RLSKKEKEERRKDMAEVQEKV) adopt a coiled-coil conformation. A helical membrane pass occupies residues 30-50 (VFSVVVPVVVAFTVVIMLIVY).

The protein belongs to the SMCO4 family.

The protein localises to the membrane. The protein is Single-pass membrane and coiled-coil domain-containing protein 4 homolog of Argas monolakensis (Mono lake bird tick).